Consider the following 331-residue polypeptide: MVSSTSELITQPVNREEVVPSRKRIKLPAWLEVVKPRLIPLLLATTVGGMALSEEWPLPSPRLACTLGGGALAAAAAGALNCLWEQDLDKRMKRTSNRALPSGRLSQSSVFIGAVACTLVSSALLVSGVNCLAAGLTLLGLCSYVLLYTAFLKPRTSQNIVFGGVAGAIPPLVGASAAAGHIGLGGWWLFSLVMVWTPAHFWALAILLKEDYRSVGIPMLPTVSGPFVTAKAISVYGYLTVFLSFLGCFVLPEGGLLYGILLLPYNSRLLQLVSRLRDNPEDLDRAKGLFRWSILYMFGVCFLLVISRLQVSIVFNDQLIALIKDFSIGFS.

The next 8 membrane-spanning stretches (helical) occupy residues 63-83 (LACTLGGGALAAAAAGALNCL), 109-129 (SVFIGAVACTLVSSALLVSGV), 132-152 (LAAGLTLLGLCSYVLLYTAFL), 160-180 (IVFGGVAGAIPPLVGASAAAG), 188-208 (WLFSLVMVWTPAHFWALAILL), 215-235 (VGIPMLPTVSGPFVTAKAISV), 241-261 (VFLSFLGCFVLPEGGLLYGIL), and 294-314 (ILYMFGVCFLLVISRLQVSIV).

It belongs to the UbiA prenyltransferase family. Protoheme IX farnesyltransferase subfamily.

The protein resides in the cell inner membrane. It carries out the reaction heme b + (2E,6E)-farnesyl diphosphate + H2O = Fe(II)-heme o + diphosphate. The protein operates within porphyrin-containing compound metabolism; heme O biosynthesis; heme O from protoheme: step 1/1. Its function is as follows. Converts heme B (protoheme IX) to heme O by substitution of the vinyl group on carbon 2 of heme B porphyrin ring with a hydroxyethyl farnesyl side group. This is Protoheme IX farnesyltransferase from Prochlorococcus marinus (strain NATL1A).